A 235-amino-acid polypeptide reads, in one-letter code: Ornithine decarboxylase antizyme 3 (235 aa).

Serine 9 and serine 12 each carry phosphoserine.

This sequence belongs to the ODC antizyme family. In terms of assembly, interacts with ODC1 and thereby sterically blocks ODC homodimerization. Interacts with AZIN2; this interaction disrupts the interaction between the antizyme and ODC1. Interacts with GGN. In terms of tissue distribution, testis specific.

It is found in the nucleus. It localises to the cytoplasm. Functionally, ornithine decarboxylase (ODC) antizyme protein that negatively regulates ODC activity and intracellular polyamine biosynthesis and uptake in response to increased intracellular polyamine levels. Binds to ODC monomers, inhibiting the assembly of the functional ODC homodimers. Does not target the ODC monomers for degradation, which allows a protein synthesis-independent restoration of ODC activity. Stabilizes AZIN2 by interfering with its ubiquitination. Involved in the translocation of AZNI2 from ER-Golgi intermediate compartment (ERGIC) to the cytosol. Probably plays a key role in spermatogenesis by regulating the intracellular concentration of polyamines in haploid germ cells. The sequence is that of Ornithine decarboxylase antizyme 3 (OAZ3) from Homo sapiens (Human).